A 492-amino-acid chain; its full sequence is E1B 55 kDa protein (492 aa).

Residues 22-112 (ENMEGSQDED…ERNPSGNNSR (91 aa)) form a disordered region. Residues 34–44 (RLLASAASGSS) are compositionally biased toward low complexity. Phosphoserine is present on residues S486 and S487. Phosphothreonine is present on T491.

The protein belongs to the adenoviridae E1B 55 kDa protein family. In terms of assembly, interacts with host PML-4 and PML-5; this interaction promotes efficient subnuclear targeting of E1B-55K to PML nuclear bodies. Interacts with E4-ORF3 protein. Interacts with E4-ORF6 protein.

The protein resides in the host nucleus. Its subcellular location is the host cytoplasm. Its function is as follows. Plays a major role to prevent cellular inhibition of viral genome replication. Assembles an SCF-like E3 ubiquitin ligase complex based on the cellular proteins ELOB, ELOC, CUL5 and RBX1, in cooperation with viral E4orf6. This viral RING-type ligase ubiquitinates cellular substrates and targets them to proteasomal degradation: TP53/p53, LIG4, MRE11-RAD50-NBS1 (MRN) complex, ITGA3, DAXX and BLM. E1B-55K probably acts as the substrate-specific adapter of the SCF-like E3 ubiquitin ligase complex. Degradation of host TP53/p53 activity is essential for preventing E1A-induced TP53 accumulation that would otherwise lead to cell apoptosis and growth arrest. E1B-55K also inactivates TP53 transcription-factor activity by binding its transactivation domain. E1B-55K also functions as a SUMO1 E3 ligase for TP53 which causes the latter to be sequestered in promyelocytic leukemia (PML) nuclear bodies thereby contributing to maximal inhibition of TP53 function. The protein is E1B 55 kDa protein of Human adenovirus B serotype 7 (HAdV-7).